Consider the following 202-residue polypeptide: LexA repressor (202 aa).

A DNA-binding region (H-T-H motif) is located at residues 28–48 (RAEIAQRLGFRSPNAAEEHLK). Residues Ser119 and Lys156 each act as for autocatalytic cleavage activity in the active site.

Belongs to the peptidase S24 family. Homodimer.

The enzyme catalyses Hydrolysis of Ala-|-Gly bond in repressor LexA.. In terms of biological role, represses a number of genes involved in the response to DNA damage (SOS response), including recA and lexA. Binds to the 16 bp palindromic sequence 5'-CTGTATATATATACAG-3'. In the presence of single-stranded DNA, RecA interacts with LexA causing an autocatalytic cleavage which disrupts the DNA-binding part of LexA, leading to derepression of the SOS regulon and eventually DNA repair. This Yersinia enterocolitica serotype O:8 / biotype 1B (strain NCTC 13174 / 8081) protein is LexA repressor.